Reading from the N-terminus, the 152-residue chain is Antiholin-like protein LrgA (152 aa).

4 helical membrane-spanning segments follow: residues 23–43 (YSIF…KIIE), 45–65 (FMPI…IALC), 77–97 (VGTA…ISVI), and 108–128 (ILII…TGFA).

This sequence belongs to the CidA/LrgA family. LrgA subfamily.

It is found in the cell membrane. Inhibits the expression or activity of extracellular murein hydrolases by interacting, possibly with LrgB, with the holin-like proteins CidA and/or CidB. The LrgAB and CidAB proteins may affect the proton motive force of the membrane. May be involved in programmed cell death (PCD), possibly triggering PCD in response to antibiotics and environmental stresses. The sequence is that of Antiholin-like protein LrgA from Staphylococcus epidermidis (strain ATCC 35984 / DSM 28319 / BCRC 17069 / CCUG 31568 / BM 3577 / RP62A).